A 160-amino-acid polypeptide reads, in one-letter code: UPF0479 membrane protein YLL066W-A (160 aa).

2 helical membrane passes run 39-59 (IVFC…KVLQ) and 136-156 (VPMI…ISQH).

It belongs to the UPF0479 family.

It is found in the membrane. The sequence is that of UPF0479 membrane protein YLL066W-A from Saccharomyces cerevisiae (strain ATCC 204508 / S288c) (Baker's yeast).